The sequence spans 306 residues: Oligopeptide transport system permease protein OppB (306 aa).

Topologically, residues 1–8 (MLKFIFKR) are cytoplasmic. The helical transmembrane segment at 9–29 (LLEALPTLFILITFSFFLMRL) threads the bilayer. Over 30–99 (APGSPFTSER…IASAFPVSIK (70 aa)) the chain is Periplasmic. The ABC transmembrane type-1 domain occupies 94 to 293 (FPVSIKLGMV…TLTILFNAIV (200 aa)). A helical membrane pass occupies residues 100-120 (LGMVAFAFAVVLGVTAGTLAA). Residues 121–135 (LNQNSRWDYILMSFS) lie on the Cytoplasmic side of the membrane. The chain crosses the membrane as a helical span at residues 136–156 (MLGVIMPSFVFAPVLVLIFAI). At 157 to 169 (YLGWLPAGGWNGG) the chain is on the periplasmic side. The chain crosses the membrane as a helical span at residues 170 to 190 (TAMYMILPVASLTIAYVAGIA). At 191–229 (RIMRGSMIEVLHSNFIRTAKAKGLSMSRIILKHALRPAL) the chain is on the cytoplasmic side. Residues 230-250 (LPVITYLGPAFVGIITGSMVI) form a helical membrane-spanning segment. Over 251–279 (ESVFGLPGMGLLFVNGALNRDYSLVLSLT) the chain is Periplasmic. Residues 280–300 (ILVGTLTILFNAIVDILYAII) form a helical membrane-spanning segment. Over 301-306 (DPKIRY) the chain is Cytoplasmic.

Belongs to the binding-protein-dependent transport system permease family. OppBC subfamily. The complex is composed of two ATP-binding proteins (OppD and OppF), two transmembrane proteins (OppB and OppC) and a solute-binding protein (OppA).

Its subcellular location is the cell inner membrane. Part of the ABC transporter complex OppABCDF involved in the uptake of oligopeptides. Probably responsible for the translocation of the substrate across the membrane. This is Oligopeptide transport system permease protein OppB (oppB) from Haemophilus influenzae (strain ATCC 51907 / DSM 11121 / KW20 / Rd).